A 168-amino-acid chain; its full sequence is NADH-quinone oxidoreductase subunit I (168 aa).

2 4Fe-4S ferredoxin-type domains span residues 58–88 (LRRYPNGEERCIACKLCEAVCPAQAITIEAG) and 99–128 (VRYDIDMVKCIYCGLCQEACPVDAIVEGPN). [4Fe-4S] cluster is bound by residues Cys-68, Cys-71, Cys-74, Cys-78, Cys-108, Cys-111, Cys-114, and Cys-118.

The protein belongs to the complex I 23 kDa subunit family. NDH-1 is composed of 14 different subunits. Subunits NuoA, H, J, K, L, M, N constitute the membrane sector of the complex. It depends on [4Fe-4S] cluster as a cofactor.

The protein resides in the cell inner membrane. The enzyme catalyses a quinone + NADH + 5 H(+)(in) = a quinol + NAD(+) + 4 H(+)(out). Functionally, NDH-1 shuttles electrons from NADH, via FMN and iron-sulfur (Fe-S) centers, to quinones in the respiratory chain. The immediate electron acceptor for the enzyme in this species is believed to be ubiquinone. Couples the redox reaction to proton translocation (for every two electrons transferred, four hydrogen ions are translocated across the cytoplasmic membrane), and thus conserves the redox energy in a proton gradient. This is NADH-quinone oxidoreductase subunit I from Bradyrhizobium diazoefficiens (strain JCM 10833 / BCRC 13528 / IAM 13628 / NBRC 14792 / USDA 110).